A 202-amino-acid polypeptide reads, in one-letter code: Small ribosomal subunit protein uS4 (202 aa).

Positions Ser91 to Asp168 constitute an S4 RNA-binding domain.

The protein belongs to the universal ribosomal protein uS4 family. In terms of assembly, part of the 30S ribosomal subunit. Contacts protein S5. The interaction surface between S4 and S5 is involved in control of translational fidelity.

Functionally, one of the primary rRNA binding proteins, it binds directly to 16S rRNA where it nucleates assembly of the body of the 30S subunit. With S5 and S12 plays an important role in translational accuracy. In Ehrlichia ruminantium (strain Welgevonden), this protein is Small ribosomal subunit protein uS4.